We begin with the raw amino-acid sequence, 258 residues long: Axonemal dynein light intermediate polypeptide 1 (258 aa).

Disordered stretches follow at residues 19–60 and 207–231; these read RNTE…CVPD and VNEQ…EEKK. Residues 34 to 48 are compositionally biased toward low complexity; sequence SPQQPGPSGSAPQLP. Positions 176–255 form a coiled coil; it reads MRKALQAEQG…LKAQLEGIIA (80 aa).

It belongs to the inner dynein arm light chain family. In terms of assembly, interacts with CFAP45. Interacts with DYNC1H1.

Its subcellular location is the cell projection. It is found in the cilium. The protein resides in the flagellum. It localises to the dynein axonemal particle. The protein localises to the cytoplasm. Functionally, involved in sperm flagellum assembly. This Macaca fascicularis (Crab-eating macaque) protein is Axonemal dynein light intermediate polypeptide 1 (DNALI1).